Consider the following 426-residue polypeptide: Trophoblast glycoprotein (426 aa).

The N-terminal stretch at 1–31 (MPGAGSRGPSAGDGRLRLARLALVLLGWVSA) is a signal peptide. Residues 32-361 (SAPSSSLPSS…ATLPQSLQTS (330 aa)) lie on the Extracellular side of the membrane. Low complexity predominate over residues 34-51 (PSSSLPSSSTSPAAFLAS). Residues 34-54 (PSSSLPSSSTSPAAFLASGSA) are disordered. The LRRNT domain occupies 53–91 (SAQPPPAERCPAACECSEAARTVKCVNRNLLEVPADLPP). Disulfide bonds link cysteine 62/cysteine 68 and cysteine 66/cysteine 77. LRR repeat units follow at residues 92–113 (YVRNLFLTGNQMTVLPAGAFAR), 116–139 (PLADLAVLNLSGNHLKEVGAGAFE), and 141–163 (LPGLRRLDLSHNPLTNLSAFTFA). The N-linked (GlcNAc...) asparagine glycan is linked to asparagine 124. N-linked (GlcNAc...) asparagine glycosylation occurs at asparagine 166. 4 LRR repeats span residues 172-210 (PSPLLELILNHIVPPEDQRQNGSFEGMVAFEGMVAAALR), 215-238 (LRGLHHLELASNHFLYLPRDLLDQ), 239-261 (LPSLKHLDLRNNSLVSLTYASFR), and 262-281 (NLTHLESLHLEDNALKVLHN). An N-linked (GlcNAc...) asparagine glycan is attached at asparagine 281. The LRRCT domain maps to 289-352 (GLAHVRVFLD…LTSSDLDCDA (64 aa)). Intrachain disulfides connect cysteine 304–cysteine 329 and cysteine 306–cysteine 350. A helical transmembrane segment spans residues 362–382 (YVFLGIVLALIGAIFLLVLYL). At 383–426 (NRKGIKKWMHNIRDACRDHMEGYHYRYEINADPRLTNLSSNSDV) the chain is on the cytoplasmic side. Serine 424 carries the phosphoserine modification.

Highly glycosylated.

The protein resides in the cell membrane. May function as an inhibitor of Wnt/beta-catenin signaling by indirectly interacting with LRP6 and blocking Wnt3a-dependent LRP6 internalization. The protein is Trophoblast glycoprotein (Tpbg) of Rattus norvegicus (Rat).